A 150-amino-acid polypeptide reads, in one-letter code: Large ribosomal subunit protein bL9 (150 aa).

This sequence belongs to the bacterial ribosomal protein bL9 family.

Its function is as follows. Binds to the 23S rRNA. This is Large ribosomal subunit protein bL9 from Acidovorax ebreus (strain TPSY) (Diaphorobacter sp. (strain TPSY)).